The primary structure comprises 258 residues: GPI alpha-1,4-mannosyltransferase I, stabilizing subunit (258 aa).

Positions Met1–Gly21 are cleaved as a signal peptide. The Lumenal portion of the chain corresponds to Leu22–Leu230. Asn103 carries an N-linked (GlcNAc...) asparagine glycan. Residues Val231 to Phe251 form a helical membrane-spanning segment. The Cytoplasmic segment spans residues Lys252–Leu258.

The protein belongs to the PIGX family. As to quaternary structure, part of the glycosylphosphatidylinositol-mannosyltransferase I complex that is composed of PIGM and PIGX. Interacts with PIGM; PIGX stabilizes PIGM.

The protein localises to the endoplasmic reticulum membrane. It participates in glycolipid biosynthesis; glycosylphosphatidylinositol-anchor biosynthesis. Its function is as follows. Stabilizing subunit of the glycosylphosphatidylinositol-mannosyltransferase I complex which catalyzes the transfer of the first mannose, via an alpha-1,4 bond from a dolichol-phosphate-mannose (Dol-P-Man) to the glucosaminyl acyl phosphatidylinositol (GlcN-(acyl)PI) intermediate to generate alpha-D-Man-(1-&gt;4)-alpha-D-GlcN-(1-&gt;6)-(1-radyl,2-acyl-sn-glycero-3-phospho)-2-acyl-inositol and participates in the sixth step of the glycosylphosphatidylinositol-anchor biosynthesis. Probably acts by stabilizing the mannosyltransferase PIGM. The protein is GPI alpha-1,4-mannosyltransferase I, stabilizing subunit of Homo sapiens (Human).